A 581-amino-acid chain; its full sequence is Sulfate adenylyltransferase (581 aa).

Residues 1–176 (MANAPHGGVL…VQAIQAPTHF (176 aa)) are N-terminal. Positions 177–401 (DYVPLRFTPA…LRESYPPRPQ (225 aa)) are catalytic. Sulfate is bound at residue Q204. ATP is bound by residues 204–207 (QTRN) and 298–301 (GRDH). Residues T205, R206, and N207 contribute to the active site. Residue R206 coordinates sulfate. A302 serves as a coordination point for sulfate. M340 is an ATP binding site. Residues 402–581 (QGFTILLTGL…IMILESQNLV (180 aa)) form an allosteric regulation domain; adenylyl-sulfate kinase-like region. 3'-phosphoadenylyl sulfate is bound by residues 441 to 444 (EELR), 486 to 487 (TA), and R526.

This sequence in the N-terminal section; belongs to the sulfate adenylyltransferase family. In the C-terminal section; belongs to the APS kinase family. As to quaternary structure, homohexamer. Dimer of trimers.

It is found in the cytoplasm. It catalyses the reaction sulfate + ATP + H(+) = adenosine 5'-phosphosulfate + diphosphate. Its pathway is sulfur metabolism; hydrogen sulfide biosynthesis; sulfite from sulfate: step 1/3. With respect to regulation, allosterically inhibited by 3'-phosphoadenosine 5'-phosphosulfate (PAPS). Catalyzes the first intracellular reaction of sulfate assimilation, forming adenosine-5'-phosphosulfate (APS) from inorganic sulfate and ATP. Plays an important role in sulfate activation as a component of the biosynthesis pathway of sulfur-containing amino acids. In Cryptococcus neoformans var. neoformans serotype D (strain B-3501A) (Filobasidiella neoformans), this protein is Sulfate adenylyltransferase.